The primary structure comprises 138 residues: Large ribosomal subunit protein uL16 (138 aa).

Residues 1–16 are compositionally biased toward basic residues; that stretch reads MLIPRRVKHRKQHHPG. Positions 1–25 are disordered; sequence MLIPRRVKHRKQHHPGRSGAATGGT.

The protein belongs to the universal ribosomal protein uL16 family. Part of the 50S ribosomal subunit.

In terms of biological role, binds 23S rRNA and is also seen to make contacts with the A and possibly P site tRNAs. The sequence is that of Large ribosomal subunit protein uL16 from Pseudarthrobacter chlorophenolicus (strain ATCC 700700 / DSM 12829 / CIP 107037 / JCM 12360 / KCTC 9906 / NCIMB 13794 / A6) (Arthrobacter chlorophenolicus).